Consider the following 302-residue polypeptide: Probable WRKY transcription factor 40 (302 aa).

The WRKY DNA-binding region spans Asp-140–Pro-206.

Belongs to the WRKY group III family.

It localises to the nucleus. In terms of biological role, transcription factor. Interacts specifically with the W box (5'-(T)TGAC[CT]-3'), a frequently occurring elicitor-responsive cis-acting element. This is Probable WRKY transcription factor 40 from Arabidopsis thaliana (Mouse-ear cress).